Here is a 372-residue protein sequence, read N- to C-terminus: Cytochrome b (372 aa).

Transmembrane regions (helical) follow at residues 25 to 45 (FGSM…FLAI), 69 to 90 (WIMQ…YIHI), 105 to 125 (WVSG…GYVL), and 170 to 190 (FFAL…IHVM). Heme b-binding residues include His75 and His89. His174 and His188 together coordinate heme b. A ubiquinone is bound at residue His193. Transmembrane regions (helical) follow at residues 218-238 (YKDT…TSFF), 280-300 (LGGT…PFTH), 312-332 (MAQV…WAAT), and 339-358 (FTTI…IINP).

It belongs to the cytochrome b family. As to quaternary structure, the cytochrome bc1 complex contains 3 respiratory subunits (MT-CYB, CYC1 and UQCRFS1), 2 core proteins (UQCRC1 and UQCRC2) and probably 6 low-molecular weight proteins. The cofactor is heme b.

Its subcellular location is the mitochondrion inner membrane. Its function is as follows. Component of the ubiquinol-cytochrome c reductase complex (complex III or cytochrome b-c1 complex) that is part of the mitochondrial respiratory chain. The b-c1 complex mediates electron transfer from ubiquinol to cytochrome c. Contributes to the generation of a proton gradient across the mitochondrial membrane that is then used for ATP synthesis. The protein is Cytochrome b (MT-CYB) of Heterodon simus (Southern hognose snake).